The chain runs to 73 residues: Serine rich endogenous peptide 1 (73 aa).

Residues 1 to 28 form the signal peptide; that stretch reads MGMSGSSGLVHVLMLLLLLSILFHHTES. Positions 48 to 73 are disordered; that stretch reads YKPNTAVETPPSRSRRGGGGQNTGAD. An SCOOP motif motif is present at residues 53–67; it reads AVETPPSRSRRGGGG. A SxS motif essential for MIK2 binding motif is present at residues 59–61; the sequence is SRS. A compositionally biased stretch (gly residues) spans 64–73; it reads GGGGQNTGAD.

This sequence belongs to the serine rich endogenous peptide (SCOOP) phytocytokine family. As to quaternary structure, interacts with MIK2 (via extracellular leucine-rich repeat domain); this interaction triggers the formation of complex between MIK2 and the BAK1/SERK3 and SERK4 coreceptors, and subsequent BAK1 activation by phosphorylation. Mostly expressed in leaves and flowers, and, to a lower extent, in seedlings shoots.

It localises to the cell membrane. It is found in the secreted. The protein resides in the extracellular space. Its subcellular location is the apoplast. Brassicaceae-specific phytocytokine (plant endogenous peptide released into the apoplast) perceived by MIK2 in a BAK1/SERK3 and SERK4 coreceptors-dependent manner, that modulates various physiological and antimicrobial processes including growth prevention and reactive oxygen species (ROS) response regulation. The sequence is that of Serine rich endogenous peptide 1 from Arabidopsis thaliana (Mouse-ear cress).